The following is a 362-amino-acid chain: Erythritol/L-threitol dehydrogenase (362 aa).

The Zn(2+) site is built by C45, H76, E77, C109, C112, C115, and C123. The NAD(+) site is built by I195 and D215.

It belongs to the zinc-containing alcohol dehydrogenase family. Zn(2+) serves as cofactor.

It catalyses the reaction erythritol + NAD(+) = D-erythrulose + NADH + H(+). The enzyme catalyses L-threitol + NAD(+) = L-erythrulose + NADH + H(+). It functions in the pathway carbohydrate metabolism; erythritol degradation. Its pathway is carbohydrate metabolism; L-threitol degradation. Its function is as follows. Catalyzes the NAD-dependent reversible oxidation of erythritol and L-threitol. Involved in the degradation pathways of erythritol and L-threitol, that allow M.smegmatis to grow on these compounds as the sole carbon source. This chain is Erythritol/L-threitol dehydrogenase, found in Mycolicibacterium smegmatis (strain ATCC 700084 / mc(2)155) (Mycobacterium smegmatis).